The primary structure comprises 354 residues: Uroporphyrinogen decarboxylase (354 aa).

Residues 27-31, Asp77, Tyr154, Ser209, and His327 each bind substrate; that span reads RQAGR.

It belongs to the uroporphyrinogen decarboxylase family. In terms of assembly, homodimer.

The protein localises to the cytoplasm. It carries out the reaction uroporphyrinogen III + 4 H(+) = coproporphyrinogen III + 4 CO2. Its pathway is porphyrin-containing compound metabolism; protoporphyrin-IX biosynthesis; coproporphyrinogen-III from 5-aminolevulinate: step 4/4. Catalyzes the decarboxylation of four acetate groups of uroporphyrinogen-III to yield coproporphyrinogen-III. In Shewanella loihica (strain ATCC BAA-1088 / PV-4), this protein is Uroporphyrinogen decarboxylase.